The chain runs to 424 residues: Folate-like transporter 2 (424 aa).

An N-linked (GlcNAc...) asparagine glycan is attached at Asn-35. Helical transmembrane passes span 48 to 68 (IWTY…DVFL), 71 to 91 (PLLV…VFGK), 99 to 119 (LEVF…YIYV), 136 to 156 (ALLV…GLNW), 164 to 184 (IISL…PGVE), and 233 to 253 (PLIL…YQVT). The N-linked (GlcNAc...) asparagine glycan is linked to Asn-254. A run of 4 helical transmembrane segments spans residues 299 to 319 (WGDL…FWMS), 324 to 344 (IVVL…TTTI), 361 to 381 (LFGI…AVVI), and 392 to 412 (FVVY…IFGI).

The protein belongs to the reduced folate carrier (RFC) transporter (TC 2.A.48) family.

The protein resides in the membrane. Its function is as follows. Unlike folt-1, does not appear to act as a folate transporter. The protein is Folate-like transporter 2 (folt-2) of Caenorhabditis elegans.